A 299-amino-acid polypeptide reads, in one-letter code: Probable 4-deoxy-4-formamido-L-arabinose-phosphoundecaprenol deformylase ArnD (299 aa).

The region spanning 2-263 is the NodB homology domain; the sequence is IDVGLRIDVD…EASARGIRFV (262 aa).

The protein belongs to the polysaccharide deacetylase family. ArnD deformylase subfamily.

It carries out the reaction 4-deoxy-4-formamido-alpha-L-arabinopyranosyl di-trans,octa-cis-undecaprenyl phosphate + H2O = 4-amino-4-deoxy-alpha-L-arabinopyranosyl di-trans,octa-cis-undecaprenyl phosphate + formate. It functions in the pathway glycolipid biosynthesis; 4-amino-4-deoxy-alpha-L-arabinose undecaprenyl phosphate biosynthesis; 4-amino-4-deoxy-alpha-L-arabinose undecaprenyl phosphate from UDP-4-deoxy-4-formamido-beta-L-arabinose and undecaprenyl phosphate: step 2/2. It participates in bacterial outer membrane biogenesis; lipopolysaccharide biosynthesis. Functionally, catalyzes the deformylation of 4-deoxy-4-formamido-L-arabinose-phosphoundecaprenol to 4-amino-4-deoxy-L-arabinose-phosphoundecaprenol. The modified arabinose is attached to lipid A and is required for resistance to polymyxin and cationic antimicrobial peptides. This Aeromonas salmonicida (strain A449) protein is Probable 4-deoxy-4-formamido-L-arabinose-phosphoundecaprenol deformylase ArnD.